A 118-amino-acid chain; its full sequence is Class II hydrophobin CRP (118 aa).

The N-terminal stretch at M1–R22 is a signal peptide. The disordered stretch occupies residues A20 to T46. Residues R22 to S45 show a composition bias toward gly residues. Tandem repeats lie at residues S29–G30, S31–G32, S33–G34, S35–G36, S37–G38, S39–G40, and S41–G42. Positions S29–G42 are 7 X 2 AA tandem repeats of S-G. Cystine bridges form between C51-C100, C61-C91, C62-C74, and C101-C112.

The protein belongs to the cerato-ulmin hydrophobin family. In terms of assembly, homotetramer. Further self-assembles to form highly ordered films at water-air interfaces through intermolecular interactions.

The protein resides in the secreted. Its subcellular location is the cell wall. Aerial growth, conidiation, and dispersal of filamentous fungi in the environment rely upon a capability of their secreting small amphipathic proteins called hydrophobins (HPBs) with low sequence identity. Class I can self-assemble into an outermost layer of rodlet bundles on aerial cell surfaces, conferring cellular hydrophobicity that supports fungal growth, development and dispersal; whereas Class II form highly ordered films at water-air interfaces through intermolecular interactions but contribute nothing to the rodlet structure. Cryparin is a class II hydrophobin that is the most abundant protein produced by this fungus when grown in liquid culture and that plays an essential role in the fitness of this important plant pathogen by facilitating the eruption of the fungal fruiting bodies through the bark of its host tree. The polypeptide is Class II hydrophobin CRP (Cryphonectria parasitica (Chestnut blight fungus)).